We begin with the raw amino-acid sequence, 274 residues long: 4-diphosphocytidyl-2-C-methyl-D-erythritol kinase (274 aa).

The active site involves Lys-7. 90 to 100 (PMGGGLGGGSS) serves as a coordination point for ATP. Asp-132 is a catalytic residue.

Belongs to the GHMP kinase family. IspE subfamily.

The enzyme catalyses 4-CDP-2-C-methyl-D-erythritol + ATP = 4-CDP-2-C-methyl-D-erythritol 2-phosphate + ADP + H(+). The protein operates within isoprenoid biosynthesis; isopentenyl diphosphate biosynthesis via DXP pathway; isopentenyl diphosphate from 1-deoxy-D-xylulose 5-phosphate: step 3/6. Catalyzes the phosphorylation of the position 2 hydroxy group of 4-diphosphocytidyl-2C-methyl-D-erythritol. The sequence is that of 4-diphosphocytidyl-2-C-methyl-D-erythritol kinase from Dechloromonas aromatica (strain RCB).